The chain runs to 2475 residues: Gellan lyase (2475 aa).

Positions 1–35 (MRFSWKKLVSAALVMALLVGIVYPAASGRGAVASA) are cleaved as a signal peptide. One can recognise a Fibronectin type-III domain in the interval 623-708 (APANVQVAIS…QPATATSPGE (86 aa)). The NodB homology domain occupies 1295-1518 (GAFSLTIDDN…RDQIWVGRYG (224 aa)). In terms of domain architecture, Cohesin spans 2111 to 2223 (QPGQQLELTV…VSTAVSLSDF (113 aa)).

Subject to proteolytic processing after secretion. Cleavage occurs between Gly-1205 and Leu-1206. This gives rise to a N-terminal gellan lyase of 130 kDa being the mature form of the gellan lyase. The function of C-terminal gellan lyase is not known.

It is found in the secreted. The enzyme catalyses Eliminative cleavage of beta-D-glucopyranosyl-(1-&gt;4)-beta-D-glucopyranosyluronate bonds of gellan backbone releasing tetrasaccharides containing a 4-deoxy-4,5-unsaturated D-glucopyranosyluronic acid at the non-reducing end. The tetrasaccharide produced from deacetylated gellan is beta-D-4-deoxy-Delta(4)-GlcAp-(1-&gt;4)-beta-D-Glcp-(1-&gt;4)-alpha-L-Rhap-(1-&gt;3)-beta-D-Glcp.. Its function is as follows. Cleaves the glycosidic bonds of gellan backbone and releases tetrasaccharide units of glucuronyl-glucosyl-rhamnosyl-glucose with unsaturated glucuronic acid at the non-reducing terminal. The enzyme is highly specific to the heteropolysaccharide gellan, especially deacetylated gellan. In Bacillus sp, this protein is Gellan lyase.